The primary structure comprises 100 residues: Protein Tat (100 aa).

The interval 1 to 20 (MEPVNPSLEPWKHPGSQPKT) is disordered. The interval 1 to 24 (MEPVNPSLEPWKHPGSQPKTACTN) is interaction with human CREBBP. The segment at 1-48 (MEPVNPSLEPWKHPGSQPKTACTNCYCKKCCFHCQACFITKGLGISYG) is transactivation. Positions 22, 25, and 27 each coordinate Zn(2+). Residues 22-37 (CTNCYCKKCCFHCQAC) are cysteine-rich. Lys-28 is modified (N6-acetyllysine; by host PCAF). Residues Cys-30, His-33, Cys-34, and Cys-37 each contribute to the Zn(2+) site. Residues 38–48 (FITKGLGISYG) are core. Residues 47-100 (YGRKKRRQRRRPPQDSQTHQVSLSKPSSQPRGDPTGPKEQKKKVERETETDPVH) are disordered. The segment covering 48 to 57 (GRKKRRQRRR) has biased composition (basic residues). The short motif at 49–57 (RKKRRQRRR) is the Nuclear localization signal, RNA-binding (TAR), and protein transduction element. Residues 49 to 85 (RKKRRQRRRPPQDSQTHQVSLSKPSSQPRGDPTGPKE) are interaction with the host capping enzyme RNGTT. Lys-50 and Lys-51 each carry N6-acetyllysine; by host EP300 and GCN5L2. 2 positions are modified to asymmetric dimethylarginine; by host PRMT6: Arg-52 and Arg-53. The segment covering 61 to 76 (DSQTHQVSLSKPSSQP) has biased composition (polar residues). Lys-71 participates in a covalent cross-link: Glycyl lysine isopeptide (Lys-Gly) (interchain with G-Cter in ubiquitin). A Cell attachment site motif is present at residues 77-79 (RGD). The segment covering 82 to 100 (GPKEQKKKVERETETDPVH) has biased composition (basic and acidic residues).

This sequence belongs to the lentiviruses Tat family. In terms of assembly, interacts with host CCNT1. Associates with the P-TEFb complex composed at least of Tat, P-TEFb (CDK9 and CCNT1), TAR RNA, RNA Pol II. Recruits the HATs CREBBP, TAF1/TFIID, EP300, PCAF and GCN5L2. Interacts with host KAT5/Tip60; this interaction targets the latter to degradation. Interacts with the host deacetylase SIRT1. Interacts with host capping enzyme RNGTT; this interaction stimulates RNGTT. Binds to host KDR, and to the host integrins ITGAV/ITGB3 and ITGA5/ITGB1. Interacts with host KPNB1/importin beta-1 without previous binding to KPNA1/importin alpha-1. Interacts with EIF2AK2. Interacts with host nucleosome assembly protein NAP1L1; this interaction may be required for the transport of Tat within the nucleus, since the two proteins interact at the nuclear rim. Interacts with host C1QBP/SF2P32; this interaction involves lysine-acetylated Tat. Interacts with the host chemokine receptors CCR2, CCR3 and CXCR4. Interacts with host DPP4/CD26; this interaction may trigger an anti-proliferative effect. Interacts with host LDLR. Interacts with the host extracellular matrix metalloproteinase MMP1. Interacts with host PRMT6; this interaction mediates Tat's methylation. Interacts with, and is ubiquitinated by MDM2/Hdm2. Interacts with host PSMC3 and HTATIP2. Interacts with STAB1; this interaction may overcome SATB1-mediated repression of IL2 and IL2RA (interleukin) in T cells by binding to the same domain than HDAC1. Interacts (when acetylated) with human CDK13, thereby increasing HIV-1 mRNA splicing and promoting the production of the doubly spliced HIV-1 protein Nef. Interacts with host TBP; this interaction modulates the activity of transcriptional pre-initiation complex. Interacts with host RELA. Interacts with host PLSCR1; this interaction negatively regulates Tat transactivation activity by altering its subcellular distribution. Asymmetrical arginine methylation by host PRMT6 seems to diminish the transactivation capacity of Tat and affects the interaction with host CCNT1. In terms of processing, acetylation by EP300, CREBBP, GCN5L2/GCN5 and PCAF regulates the transactivation activity of Tat. EP300-mediated acetylation of Lys-50 promotes dissociation of Tat from the TAR RNA through the competitive binding to PCAF's bromodomain. In addition, the non-acetylated Tat's N-terminus can also interact with PCAF. PCAF-mediated acetylation of Lys-28 enhances Tat's binding to CCNT1. Lys-50 is deacetylated by SIRT1. Post-translationally, polyubiquitination by host MDM2 does not target Tat to degradation, but activates its transactivation function and fosters interaction with CCNT1 and TAR RNA. Phosphorylated by EIF2AK2 on serine and threonine residues adjacent to the basic region important for TAR RNA binding and function. Phosphorylation of Tat by EIF2AK2 is dependent on the prior activation of EIF2AK2 by dsRNA.

The protein localises to the host nucleus. The protein resides in the host nucleolus. It localises to the host cytoplasm. Its subcellular location is the secreted. Functionally, transcriptional activator that increases RNA Pol II processivity, thereby increasing the level of full-length viral transcripts. Recognizes a hairpin structure at the 5'-LTR of the nascent viral mRNAs referred to as the transactivation responsive RNA element (TAR) and recruits the cyclin T1-CDK9 complex (P-TEFb complex) that will in turn hyperphosphorylate the RNA polymerase II to allow efficient elongation. The CDK9 component of P-TEFb and other Tat-activated kinases hyperphosphorylate the C-terminus of RNA Pol II that becomes stabilized and much more processive. Other factors such as HTATSF1/Tat-SF1, SUPT5H/SPT5, and HTATIP2 are also important for Tat's function. Besides its effect on RNA Pol II processivity, Tat induces chromatin remodeling of proviral genes by recruiting the histone acetyltransferases (HATs) CREBBP, EP300 and PCAF to the chromatin. This also contributes to the increase in proviral transcription rate, especially when the provirus integrates in transcriptionally silent region of the host genome. To ensure maximal activation of the LTR, Tat mediates nuclear translocation of NF-kappa-B by interacting with host RELA. Through its interaction with host TBP, Tat may also modulate transcription initiation. Tat can reactivate a latently infected cell by penetrating in it and transactivating its LTR promoter. In the cytoplasm, Tat is thought to act as a translational activator of HIV-1 mRNAs. Its function is as follows. Extracellular circulating Tat can be endocytosed by surrounding uninfected cells via the binding to several surface receptors such as CD26, CXCR4, heparan sulfate proteoglycans (HSPG) or LDLR. Neurons are rarely infected, but they internalize Tat via their LDLR. Through its interaction with nuclear HATs, Tat is potentially able to control the acetylation-dependent cellular gene expression. Modulates the expression of many cellular genes involved in cell survival, proliferation or in coding for cytokines or cytokine receptors. Tat plays a role in T-cell and neurons apoptosis. Tat induced neurotoxicity and apoptosis probably contribute to neuroAIDS. Circulating Tat also acts as a chemokine-like and/or growth factor-like molecule that binds to specific receptors on the surface of the cells, affecting many cellular pathways. In the vascular system, Tat binds to ITGAV/ITGB3 and ITGA5/ITGB1 integrins dimers at the surface of endothelial cells and competes with bFGF for heparin-binding sites, leading to an excess of soluble bFGF. The polypeptide is Protein Tat (Homo sapiens (Human)).